The chain runs to 127 residues: Putative iron-sulfur cluster insertion protein ErpA (127 aa).

The span at 1 to 14 (MNTPFNDGSGQTDP) shows a compositional bias: polar residues. Positions 1 to 20 (MNTPFNDGSGQTDPMTDIPT) are disordered. Iron-sulfur cluster-binding residues include Cys55, Cys119, and Cys121.

Belongs to the HesB/IscA family. As to quaternary structure, homodimer. The cofactor is iron-sulfur cluster.

In terms of biological role, required for insertion of 4Fe-4S clusters. This is Putative iron-sulfur cluster insertion protein ErpA from Nitrosospira multiformis (strain ATCC 25196 / NCIMB 11849 / C 71).